Here is a 254-residue protein sequence, read N- to C-terminus: DNA repair protein RecO (254 aa).

It belongs to the RecO family.

Its function is as follows. Involved in DNA repair and RecF pathway recombination. This Anaeromyxobacter dehalogenans (strain 2CP-C) protein is DNA repair protein RecO.